A 313-amino-acid polypeptide reads, in one-letter code: Porphobilinogen deaminase (313 aa).

Cys241 carries the S-(dipyrrolylmethanemethyl)cysteine modification.

Belongs to the HMBS family. In terms of assembly, monomer. The cofactor is dipyrromethane.

The catalysed reaction is 4 porphobilinogen + H2O = hydroxymethylbilane + 4 NH4(+). It functions in the pathway porphyrin-containing compound metabolism; protoporphyrin-IX biosynthesis; coproporphyrinogen-III from 5-aminolevulinate: step 2/4. Its function is as follows. Tetrapolymerization of the monopyrrole PBG into the hydroxymethylbilane pre-uroporphyrinogen in several discrete steps. The polypeptide is Porphobilinogen deaminase (Bacillus velezensis (strain DSM 23117 / BGSC 10A6 / LMG 26770 / FZB42) (Bacillus amyloliquefaciens subsp. plantarum)).